Reading from the N-terminus, the 237-residue chain is 2,3-bisphosphoglycerate-dependent phosphoglycerate mutase (237 aa).

Substrate is bound by residues 10–17 (RHGESKWN), 23–24 (TG), R62, 89–92 (ERHY), K100, 116–117 (RR), and 185–186 (GN). H11 serves as the catalytic Tele-phosphohistidine intermediate. E89 (proton donor/acceptor) is an active-site residue.

The protein belongs to the phosphoglycerate mutase family. BPG-dependent PGAM subfamily. In terms of assembly, homodimer.

The enzyme catalyses (2R)-2-phosphoglycerate = (2R)-3-phosphoglycerate. It functions in the pathway carbohydrate degradation; glycolysis; pyruvate from D-glyceraldehyde 3-phosphate: step 3/5. Functionally, catalyzes the interconversion of 2-phosphoglycerate and 3-phosphoglycerate. The chain is 2,3-bisphosphoglycerate-dependent phosphoglycerate mutase from Baumannia cicadellinicola subsp. Homalodisca coagulata.